Here is a 43-residue protein sequence, read N- to C-terminus: Hemolysin H3C (43 aa).

The residue at position 1 (M1) is an N-formylmethionine.

It belongs to the staphylococcal hemolytic protein family.

The protein localises to the secreted. In terms of biological role, virulence factor. Causes hemolysis of erythrocytes from sheep (HD(50)=2.63 mM), rabbit (HD(50)=2.37 mM), guinea pig (HD(50)=1.98 mM), dog (HD(50)=1.02 mM) and human (HD(50)=2.07 mM). Acts synergistically with beta-hemolysins from S.aureus ATCC 25923. Cytotoxic towards human dermal fibroblasts. In Staphylococcus cohnii subsp. cohnii, this protein is Hemolysin H3C.